A 653-amino-acid polypeptide reads, in one-letter code: 4-alpha-glucanotransferase (653 aa).

Catalysis depends on E123, which acts as the Nucleophile. Residue D214 is the Proton donor of the active site.

Belongs to the glycosyl hydrolase 57 family.

The catalysed reaction is Transfers a segment of a (1-&gt;4)-alpha-D-glucan to a new position in an acceptor, which may be glucose or a (1-&gt;4)-alpha-D-glucan.. The polypeptide is 4-alpha-glucanotransferase (Thermococcus kodakarensis (strain ATCC BAA-918 / JCM 12380 / KOD1) (Pyrococcus kodakaraensis (strain KOD1))).